Reading from the N-terminus, the 151-residue chain is RNA polymerase-binding transcription factor DksA (151 aa).

C114, C117, C135, and C138 together coordinate Zn(2+). The segment at 114–138 (CNSCAVEIGIRRLEARPTANLCIDC) adopts a dksA C4-type zinc-finger fold.

This sequence belongs to the DksA family. As to quaternary structure, interacts directly with the RNA polymerase.

The protein resides in the cytoplasm. Its function is as follows. Transcription factor that acts by binding directly to the RNA polymerase (RNAP). Required for negative regulation of rRNA expression and positive regulation of several amino acid biosynthesis promoters. Also required for regulation of fis expression. The protein is RNA polymerase-binding transcription factor DksA of Buchnera aphidicola subsp. Schizaphis graminum (strain Sg).